A 132-amino-acid chain; its full sequence is U11/U12 small nuclear ribonucleoprotein 25 kDa protein (132 aa).

The 92-residue stretch at 41 to 132 (MTVRVCKMDG…VSFIKKLRQK (92 aa)) folds into the Ubiquitin-like domain.

In terms of assembly, component of the U11/U12 snRNPs that are part of the U12-type spliceosome.

It is found in the nucleus. The sequence is that of U11/U12 small nuclear ribonucleoprotein 25 kDa protein (SNRNP25) from Homo sapiens (Human).